Reading from the N-terminus, the 280-residue chain is Large ribosomal subunit protein uL2 (280 aa).

Disordered regions lie at residues 27–58 and 226–280; these read STPE…GGGH and MNPV…KHGR. Basic residues-rich tracts occupy residues 37–58 and 268–280; these read LHGH…GGGH and IVRR…KHGR.

Belongs to the universal ribosomal protein uL2 family. In terms of assembly, part of the 50S ribosomal subunit. Forms a bridge to the 30S subunit in the 70S ribosome.

Functionally, one of the primary rRNA binding proteins. Required for association of the 30S and 50S subunits to form the 70S ribosome, for tRNA binding and peptide bond formation. It has been suggested to have peptidyltransferase activity; this is somewhat controversial. Makes several contacts with the 16S rRNA in the 70S ribosome. This is Large ribosomal subunit protein uL2 from Mycobacterium marinum (strain ATCC BAA-535 / M).